Reading from the N-terminus, the 137-residue chain is Small ribosomal subunit protein uS12 (137 aa).

Disordered regions lie at residues 1 to 21 and 33 to 57; these read MPTINQLVRKPRKSKVEKSKS and KVQTNVSSPQKRGVATRVGTMTPRK. Asp-102 is subject to 3-methylthioaspartic acid.

It belongs to the universal ribosomal protein uS12 family. In terms of assembly, part of the 30S ribosomal subunit. Contacts proteins S8 and S17. May interact with IF1 in the 30S initiation complex.

Functionally, with S4 and S5 plays an important role in translational accuracy. Its function is as follows. Interacts with and stabilizes bases of the 16S rRNA that are involved in tRNA selection in the A site and with the mRNA backbone. Located at the interface of the 30S and 50S subunits, it traverses the body of the 30S subunit contacting proteins on the other side and probably holding the rRNA structure together. The combined cluster of proteins S8, S12 and S17 appears to hold together the shoulder and platform of the 30S subunit. The chain is Small ribosomal subunit protein uS12 from Streptococcus pneumoniae (strain ATCC 700669 / Spain 23F-1).